Reading from the N-terminus, the 477-residue chain is Protein nucleotidyltransferase YdiU (477 aa).

Residues Gly-89, Gly-91, Arg-92, Lys-112, Asp-124, Gly-125, Arg-178, and Arg-185 each coordinate ATP. Catalysis depends on Asp-257, which acts as the Proton acceptor. Mg(2+)-binding residues include Asn-258 and Asp-267. Asp-267 contributes to the ATP binding site.

It belongs to the SELO family. Mg(2+) is required as a cofactor. Requires Mn(2+) as cofactor.

It carries out the reaction L-seryl-[protein] + ATP = 3-O-(5'-adenylyl)-L-seryl-[protein] + diphosphate. It catalyses the reaction L-threonyl-[protein] + ATP = 3-O-(5'-adenylyl)-L-threonyl-[protein] + diphosphate. The enzyme catalyses L-tyrosyl-[protein] + ATP = O-(5'-adenylyl)-L-tyrosyl-[protein] + diphosphate. The catalysed reaction is L-histidyl-[protein] + UTP = N(tele)-(5'-uridylyl)-L-histidyl-[protein] + diphosphate. It carries out the reaction L-seryl-[protein] + UTP = O-(5'-uridylyl)-L-seryl-[protein] + diphosphate. It catalyses the reaction L-tyrosyl-[protein] + UTP = O-(5'-uridylyl)-L-tyrosyl-[protein] + diphosphate. Its function is as follows. Nucleotidyltransferase involved in the post-translational modification of proteins. It can catalyze the addition of adenosine monophosphate (AMP) or uridine monophosphate (UMP) to a protein, resulting in modifications known as AMPylation and UMPylation. The protein is Protein nucleotidyltransferase YdiU of Synechocystis sp. (strain ATCC 27184 / PCC 6803 / Kazusa).